A 405-amino-acid chain; its full sequence is Tryptophan synthase beta chain (405 aa).

Position 98 is an N6-(pyridoxal phosphate)lysine (lysine 98).

The protein belongs to the TrpB family. Tetramer of two alpha and two beta chains. Requires pyridoxal 5'-phosphate as cofactor.

The catalysed reaction is (1S,2R)-1-C-(indol-3-yl)glycerol 3-phosphate + L-serine = D-glyceraldehyde 3-phosphate + L-tryptophan + H2O. It functions in the pathway amino-acid biosynthesis; L-tryptophan biosynthesis; L-tryptophan from chorismate: step 5/5. In terms of biological role, the beta subunit is responsible for the synthesis of L-tryptophan from indole and L-serine. This Xylella fastidiosa (strain M12) protein is Tryptophan synthase beta chain.